A 343-amino-acid polypeptide reads, in one-letter code: Tetraacyldisaccharide 4'-kinase (343 aa).

Residue 58 to 65 (VAGGAGKT) participates in ATP binding.

The protein belongs to the LpxK family.

The enzyme catalyses a lipid A disaccharide + ATP = a lipid IVA + ADP + H(+). Its pathway is glycolipid biosynthesis; lipid IV(A) biosynthesis; lipid IV(A) from (3R)-3-hydroxytetradecanoyl-[acyl-carrier-protein] and UDP-N-acetyl-alpha-D-glucosamine: step 6/6. Functionally, transfers the gamma-phosphate of ATP to the 4'-position of a tetraacyldisaccharide 1-phosphate intermediate (termed DS-1-P) to form tetraacyldisaccharide 1,4'-bis-phosphate (lipid IVA). This is Tetraacyldisaccharide 4'-kinase from Polaromonas naphthalenivorans (strain CJ2).